A 199-amino-acid chain; its full sequence is Prolactin (199 aa).

Cysteines 4 and 11 form a disulfide. The residue at position 26 (S26) is a Phosphoserine. An N-linked (GlcNAc...) asparagine; partial glycan is attached at N31. A phosphoserine mark is found at S34 and S90. Intrachain disulfides connect C58/C174 and C191/C199.

Belongs to the somatotropin/prolactin family. As to quaternary structure, interacts with PRLR.

It is found in the secreted. Prolactin acts primarily on the mammary gland by promoting lactation. The sequence is that of Prolactin (PRL) from Camelus dromedarius (Dromedary).